A 119-amino-acid polypeptide reads, in one-letter code: Large ribosomal subunit protein uL18 (119 aa).

Residues Met1–Gly23 form a disordered region.

The protein belongs to the universal ribosomal protein uL18 family. Part of the 50S ribosomal subunit; part of the 5S rRNA/L5/L18/L25 subcomplex. Contacts the 5S and 23S rRNAs.

Functionally, this is one of the proteins that bind and probably mediate the attachment of the 5S RNA into the large ribosomal subunit, where it forms part of the central protuberance. The chain is Large ribosomal subunit protein uL18 from Chlorobium chlorochromatii (strain CaD3).